Reading from the N-terminus, the 189-residue chain is Large ribosomal subunit protein uL13 (189 aa).

The protein belongs to the universal ribosomal protein uL13 family.

The polypeptide is Large ribosomal subunit protein uL13 (rpl13a) (Salmo trutta (Brown trout)).